We begin with the raw amino-acid sequence, 159 residues long: Protein-export protein SecB (159 aa).

The protein belongs to the SecB family. In terms of assembly, homotetramer, a dimer of dimers. One homotetramer interacts with 1 SecA dimer.

It localises to the cytoplasm. In terms of biological role, one of the proteins required for the normal export of preproteins out of the cell cytoplasm. It is a molecular chaperone that binds to a subset of precursor proteins, maintaining them in a translocation-competent state. It also specifically binds to its receptor SecA. In Nitrobacter hamburgensis (strain DSM 10229 / NCIMB 13809 / X14), this protein is Protein-export protein SecB.